Reading from the N-terminus, the 100-residue chain is uncharacterized protein (100 aa).

Residues 42 to 84 (PGEPWRTAGGIGEGGAGGDGAAAGGEGDVHGRPAGAEDGEDGA) form a disordered region. A compositionally biased stretch (gly residues) spans 50–67 (GGIGEGGAGGDGAAAGGE).

This is an uncharacterized protein from Torque teno tamarin virus (isolate So-TTV2).